The primary structure comprises 349 residues: MTQKNASSASPLSYKDAGVDIDAGDALIERIKPLAKKTMREGVLAGIGGFGALFEVPKRYKEPVLVSGTDGVGTKLKLAFEWNMHDTVGIDLVAMSVNDVLVQGAEPLFFLDYFACGKLDVDTAAAVVGGVAKGCELSGCALIGGETAEMPGMYPPGEYDLAGFCVGAVEKSKILTGVAIKPGDVVMGLASSGVHSNGFSLVRKCIERAGANAPATLDGKPFKQALMEPTRLYVKNVLAALAAHPIKALAHITGGGLLENIPRVLPEGTAAHLTKGSWPQTELFAWLQKTAGIDDFEMNRTFNNGIGMVVVIDASQAAACAATLRAAGEAVYVIGVIAARGDDAAVLVR.

This sequence belongs to the AIR synthase family.

It localises to the cytoplasm. The enzyme catalyses 2-formamido-N(1)-(5-O-phospho-beta-D-ribosyl)acetamidine + ATP = 5-amino-1-(5-phospho-beta-D-ribosyl)imidazole + ADP + phosphate + H(+). It participates in purine metabolism; IMP biosynthesis via de novo pathway; 5-amino-1-(5-phospho-D-ribosyl)imidazole from N(2)-formyl-N(1)-(5-phospho-D-ribosyl)glycinamide: step 2/2. The chain is Phosphoribosylformylglycinamidine cyclo-ligase from Albidiferax ferrireducens (strain ATCC BAA-621 / DSM 15236 / T118) (Rhodoferax ferrireducens).